Consider the following 274-residue polypeptide: Ribulose-phosphate 3-epimerase, chloroplastic (274 aa).

Residues 1–39 (MASPSSSSSLCSTFASPRAASLGRRLAFSSPRKAFRVRA) constitute a chloroplast transit peptide. Serine 56 contributes to the substrate binding site. Residues histidine 81, aspartate 83, and histidine 114 each coordinate a divalent metal cation. Catalysis depends on aspartate 83, which acts as the Proton acceptor. Substrate is bound by residues histidine 114, 192–195 (GFGG), 225–227 (DGG), and 247–248 (GS). Aspartate 225 contributes to the a divalent metal cation binding site. Aspartate 225 acts as the Proton donor in catalysis.

It belongs to the ribulose-phosphate 3-epimerase family. In terms of assembly, homooctamer. It depends on Co(2+) as a cofactor. The cofactor is Fe(2+). Mn(2+) serves as cofactor. Zn(2+) is required as a cofactor.

The protein localises to the plastid. It localises to the chloroplast thylakoid membrane. The enzyme catalyses D-ribulose 5-phosphate = D-xylulose 5-phosphate. Its pathway is carbohydrate biosynthesis; Calvin cycle. In terms of biological role, catalyzes the reversible epimerization of D-ribulose 5-phosphate to D-xylulose 5-phosphate. This is Ribulose-phosphate 3-epimerase, chloroplastic (RPE) from Oryza sativa subsp. japonica (Rice).